The sequence spans 322 residues: Aldo-keto reductase family 1 member C23 (322 aa).

Residue 20-24 coordinates NADP(+); that stretch reads GFGTY. Residue K31 coordinates substrate. D50 serves as a coordination point for NADP(+). Y55 functions as the Proton donor in the catalytic mechanism. Residue H117 participates in substrate binding. Residues 166–167, Q190, 216–221, and 269–279 each bind NADP(+); these read SN, YSALGS, and KSYNEKRIKEN.

Belongs to the aldo/keto reductase family. As to quaternary structure, monomer. As to expression, detected in follicle granulosa cells (at protein level). Detected in heart, lung, liver, kidney, stomach, uterus, testis, skeletal muscle and granulosa cells of the follicle wall.

It is found in the cytoplasm. Functionally, NADP-dependent oxidoreductase that has 20-alpha-hydroxysteroid dehydrogenase activity. In Equus caballus (Horse), this protein is Aldo-keto reductase family 1 member C23 (AKR1C23).